A 412-amino-acid polypeptide reads, in one-letter code: MNYLPQQDPQVFATIEQERKRQHAKIELIASENFVSRAVMEAQGSVMTNKYAEGYPGRRYYGGCEYVDVVEDLARERAKQLFGAEHANVQPHSGAQANMAVYFTVLKPGDTVLGMNLSHGGHLTHGSPVNFSGVQYNFVEYGVDPETHVIDYDDVREKARLHRPKLIVAGASAYPRVIDFAKFREIADEVGAYLMVDMAHIAGLVAAGLHPNPVPYAHFVTTTTHKTLRGPRGGMILCQEQFAKQIDKSIFPGIQGGPLMHVIAAKAVALGEALQDDFKVYAKRIIDNAQRLAAALQKEGFTLVSGGTDNHLLLVDLRPQQLTGKTAEKVLDEVGITVNKNTIPYDPESPFVTSGIRIGTAAVTTRGFGLEEMDEIASLIGLVLKNIDNEQALEEARQRVVALTEKFPLYQD.

Residues Leu117 and 121-123 (GHL) contribute to the (6S)-5,6,7,8-tetrahydrofolate site. Lys226 bears the N6-(pyridoxal phosphate)lysine mark. 349–351 (SPF) is a binding site for (6S)-5,6,7,8-tetrahydrofolate.

It belongs to the SHMT family. As to quaternary structure, homodimer. Pyridoxal 5'-phosphate serves as cofactor.

The protein localises to the cytoplasm. It catalyses the reaction (6R)-5,10-methylene-5,6,7,8-tetrahydrofolate + glycine + H2O = (6S)-5,6,7,8-tetrahydrofolate + L-serine. It functions in the pathway one-carbon metabolism; tetrahydrofolate interconversion. Its pathway is amino-acid biosynthesis; glycine biosynthesis; glycine from L-serine: step 1/1. In terms of biological role, catalyzes the reversible interconversion of serine and glycine with tetrahydrofolate (THF) serving as the one-carbon carrier. This reaction serves as the major source of one-carbon groups required for the biosynthesis of purines, thymidylate, methionine, and other important biomolecules. Also exhibits THF-independent aldolase activity toward beta-hydroxyamino acids, producing glycine and aldehydes, via a retro-aldol mechanism. This chain is Serine hydroxymethyltransferase, found in Geobacillus thermodenitrificans (strain NG80-2).